The following is an 83-amino-acid chain: Small ribosomal subunit protein bS16 (83 aa).

The protein belongs to the bacterial ribosomal protein bS16 family.

The protein is Small ribosomal subunit protein bS16 of Pseudomonas putida (strain W619).